The chain runs to 776 residues: Systemic RNA interference defective protein 1 (776 aa).

An N-terminal signal peptide occupies residues methionine 1–threonine 17. The Extracellular portion of the chain corresponds to glutamine 18–alanine 319. N-linked (GlcNAc...) asparagine glycosylation is found at asparagine 19, asparagine 20, asparagine 32, asparagine 205, asparagine 210, asparagine 234, asparagine 290, and asparagine 311. Positions threonine 22 to glutamine 312 are involved in dsRNA-binding. The chain crosses the membrane as a helical span at residues leucine 320–isoleucine 340. At lysine 341–glutamine 429 the chain is on the cytoplasmic side. Residues proline 360–glutamate 390 form a disordered region. A compositionally biased stretch (basic and acidic residues) spans glutamate 362–glutamine 373. A helical transmembrane segment spans residues methionine 430–histidine 450. The Extracellular segment spans residues lysine 451–asparagine 481. Residues asparagine 482–cysteine 502 traverse the membrane as a helical segment. Residues arginine 503–serine 510 are Cytoplasmic-facing. A helical transmembrane segment spans residues histidine 511 to leucine 531. At glutamine 532–proline 543 the chain is on the extracellular side. Residues serine 544–valine 564 form a helical membrane-spanning segment. The Cytoplasmic portion of the chain corresponds to arginine 565–serine 575. A helical membrane pass occupies residues proline 576 to phenylalanine 596. Residues serine 597–threonine 599 lie on the Extracellular side of the membrane. A helical transmembrane segment spans residues serine 600–alanine 620. At lysine 621–arginine 633 the chain is on the cytoplasmic side. The helical transmembrane segment at phenylalanine 634–serine 654 threads the bilayer. Over alanine 655–asparagine 659 the chain is Extracellular. Residues glutamine 660–methionine 680 form a helical membrane-spanning segment. At lysine 681–lysine 691 the chain is on the cytoplasmic side. Residues alanine 692–glutamine 712 form a helical membrane-spanning segment. At aspartate 713–aspartate 741 the chain is on the extracellular side. A helical membrane pass occupies residues leucine 742 to aspartate 762. The Cytoplasmic portion of the chain corresponds to aspartate 763–phenylalanine 776.

The protein belongs to the SID1 family. In terms of assembly, may self-associate to form multimers. Expressed in most non-neuronal cells, including body wall muscle cells.

The protein resides in the cell membrane. Plays a role in RNA-mediated gene silencing by acting cell-autonomously as a channel for the transport of double-stranded RNA (dsRNA) between cells. Mediates the spread of dsRNA and subsequent silencing of genes in cells distant from the site of dsRNA introduction. Selective for dsRNA. Preferentially binds long dsRNA, from 50 base pairs up to 700. Short 20 base-pair long molecules are not bound. May also bind dsDNA, but with lower affinity. Binding may be sequence-independent. Required for avoidance behavior induced by small RNAs derived from pathogenic bacteria such as P.aeruginosa. The polypeptide is Systemic RNA interference defective protein 1 (Caenorhabditis elegans).